A 1180-amino-acid polypeptide reads, in one-letter code: DNA-directed RNA polymerase subunit beta (1180 aa).

The protein belongs to the RNA polymerase beta chain family. The RNAP catalytic core consists of 2 alpha, 1 beta, 1 beta' and 1 omega subunit. When a sigma factor is associated with the core the holoenzyme is formed, which can initiate transcription.

It carries out the reaction RNA(n) + a ribonucleoside 5'-triphosphate = RNA(n+1) + diphosphate. DNA-dependent RNA polymerase catalyzes the transcription of DNA into RNA using the four ribonucleoside triphosphates as substrates. This is DNA-directed RNA polymerase subunit beta from Macrococcus caseolyticus (strain JCSC5402) (Macrococcoides caseolyticum).